Reading from the N-terminus, the 306-residue chain is Agmatinase (306 aa).

Mn(2+) contacts are provided by H126, D149, H151, D153, D230, and D232.

This sequence belongs to the arginase family. Agmatinase subfamily. Requires Mn(2+) as cofactor.

It catalyses the reaction agmatine + H2O = urea + putrescine. Its pathway is amine and polyamine biosynthesis; putrescine biosynthesis via agmatine pathway; putrescine from agmatine: step 1/1. Catalyzes the formation of putrescine from agmatine. This chain is Agmatinase, found in Escherichia coli O1:K1 / APEC.